Reading from the N-terminus, the 464-residue chain is Glutamate decarboxylase beta (464 aa).

An N6-(pyridoxal phosphate)lysine modification is found at lysine 275.

This sequence belongs to the group II decarboxylase family. Pyridoxal 5'-phosphate is required as a cofactor.

It carries out the reaction L-glutamate + H(+) = 4-aminobutanoate + CO2. In terms of biological role, converts internalized glutamate to GABA and increases the internal pH. Involved in glutamate-dependent acid resistance in gastric fluid. This chain is Glutamate decarboxylase beta (gadB), found in Listeria innocua serovar 6a (strain ATCC BAA-680 / CLIP 11262).